A 577-amino-acid polypeptide reads, in one-letter code: Cleavage stimulation factor subunit 2 (577 aa).

At Ser14 the chain carries Phosphoserine. In terms of domain architecture, RRM spans 16-94 (RSVFVGNIPY…RALRVDNAAS (79 aa)). Positions 108-248 (APVIESPYGE…VNGAPPLMQA (141 aa)) are interactions with CSTF3 and SYMPK. A Glycyl lysine isopeptide (Lys-Gly) (interchain with G-Cter in SUMO2) cross-link involves residue Lys189. The disordered stretch occupies residues 207 to 230 (PVHGAGPGSGSNVSMNQQNPQAPQ). Omega-N-methylarginine is present on Arg308. The tract at residues 319-409 (RGLLGDAPND…DGRGGRDPRG (91 aa)) is disordered. Positions 360–373 (PGHESRGPPPHELR) are enriched in basic and acidic residues. Residues 410-414 (IDARG) form a 1; approximate repeat. Positions 410-469 (IDARGMEARAMEARGLDARGLEARAMEARAMEARAMEARAMEARAMEVRGMEARGMDTRG) are 12 X 5 AA tandem repeats of M-E-A-R-[AG]. 2 tandem repeats follow at residues 415–419 (MEARA) and 420–424 (MEARG). One copy of the 4; approximate repeat lies at 425–429 (LDARG). One copy of the 5; approximate repeat lies at 430–434 (LEARA). 4 repeat units span residues 435-439 (MEARA), 440-444 (MEARA), 445-449 (MEARA), and 450-454 (MEARA). The 10; approximate repeat unit spans residues 455–459 (MEVRG). Repeat 11 spans residues 460-464 (MEARG). Residues 465–469 (MDTRG) form a 12; approximate repeat. An omega-N-methylarginine mark is found at Arg468 and Arg475. A disordered region spans residues 509 to 532 (LQGASIQGGSQPGGFSPGQNQVTP). The interaction with RPO2TC1 stretch occupies residues 514 to 577 (IQGGSQPGGF…EQIQKSTGAP (64 aa)). Phosphoserine is present on residues Ser518 and Ser524.

The CSTF complex is composed of CSTF1 (50 kDa subunit), CSTF2 (64 kDa subunit) and CSTF3 (77 kDa subunit). CSTF2 directly interacts with CSTF3, SYMPK and RPO2TC1. Interacts with HSF1 in heat-stressed cells. Interacts with CPSF2, CPSF3 and FIP1L1. Interacts with DDX1.

It localises to the nucleus. In terms of biological role, one of the multiple factors required for polyadenylation and 3'-end cleavage of mammalian pre-mRNAs. This subunit is directly involved in the binding to pre-mRNAs. This is Cleavage stimulation factor subunit 2 (CSTF2) from Pongo abelii (Sumatran orangutan).